The following is a 150-amino-acid chain: 3-hydroxyacyl-[acyl-carrier-protein] dehydratase FabZ (150 aa).

The active site involves H54.

This sequence belongs to the thioester dehydratase family. FabZ subfamily.

The protein localises to the cytoplasm. It catalyses the reaction a (3R)-hydroxyacyl-[ACP] = a (2E)-enoyl-[ACP] + H2O. Functionally, involved in unsaturated fatty acids biosynthesis. Catalyzes the dehydration of short chain beta-hydroxyacyl-ACPs and long chain saturated and unsaturated beta-hydroxyacyl-ACPs. The sequence is that of 3-hydroxyacyl-[acyl-carrier-protein] dehydratase FabZ from Psychromonas ingrahamii (strain DSM 17664 / CCUG 51855 / 37).